Reading from the N-terminus, the 345-residue chain is Methionine import ATP-binding protein MetN 4 (345 aa).

An ABC transporter domain is found at 2 to 241 (IELTNITKTF…PQLRTTKRFV (240 aa)). Residue 38–45 (GYSGAGKS) participates in ATP binding.

The protein belongs to the ABC transporter superfamily. Methionine importer (TC 3.A.1.24) family. In terms of assembly, the complex is composed of two ATP-binding proteins (MetN), two transmembrane proteins (MetI) and a solute-binding protein (MetQ).

Its subcellular location is the cell membrane. It carries out the reaction L-methionine(out) + ATP + H2O = L-methionine(in) + ADP + phosphate + H(+). The catalysed reaction is D-methionine(out) + ATP + H2O = D-methionine(in) + ADP + phosphate + H(+). Its function is as follows. Part of the ABC transporter complex MetNIQ involved in methionine import. Responsible for energy coupling to the transport system. This is Methionine import ATP-binding protein MetN 4 from Oceanobacillus iheyensis (strain DSM 14371 / CIP 107618 / JCM 11309 / KCTC 3954 / HTE831).